A 299-amino-acid polypeptide reads, in one-letter code: MADTVEFAKMNGLANKILVVDMRGRKDMVTPAAAIALNSNPATQFDQIMAIHDPRVGGTDAFIDILNCDGTKAQACGNGTRCVVQALSSETGKTSFTFQTVAGILNAVEHEDGMISVDMGLPRFRWSDIPLSEEFHDTSRIELQIGPIDAPILHSPAVMSMGNPHAIFWVDRDPMTFDLERFGPLLENHPMFPEKANITLAQVISDSALRTRTWERGAGLTLACGSAACASAVSAARTGRTGRKVTIDVASSPVRVPLTIDWREDNHVVMTGPAEWEWSGSVDPVTGVWARDAVERGAV.

Asn15, Gln47, and Asn67 together coordinate substrate. The active-site Proton donor is Cys76. Substrate is bound by residues 77–78 (GN), Asn163, Asn197, and 215–216 (ER). Residue Cys224 is the Proton acceptor of the active site. 225–226 (GS) lines the substrate pocket.

Belongs to the diaminopimelate epimerase family. Homodimer.

The protein resides in the cytoplasm. It carries out the reaction (2S,6S)-2,6-diaminopimelate = meso-2,6-diaminopimelate. The protein operates within amino-acid biosynthesis; L-lysine biosynthesis via DAP pathway; DL-2,6-diaminopimelate from LL-2,6-diaminopimelate: step 1/1. Catalyzes the stereoinversion of LL-2,6-diaminopimelate (L,L-DAP) to meso-diaminopimelate (meso-DAP), a precursor of L-lysine and an essential component of the bacterial peptidoglycan. The sequence is that of Diaminopimelate epimerase from Agrobacterium fabrum (strain C58 / ATCC 33970) (Agrobacterium tumefaciens (strain C58)).